Consider the following 577-residue polypeptide: ABC transporter G family member 4 (577 aa).

The ABC transporter domain occupies 6–248 (LSTSSISYAK…LLSKGFTVPS (243 aa)). 48-55 (GPSGAGKS) is a binding site for ATP. Positions 299-509 (TEISLLSSRF…ALDALLINEY (211 aa)) constitute an ABC transmembrane type-2 domain. Transmembrane regions (helical) follow at residues 318–338 (LLLT…TIYL), 353–373 (LFAF…PIFI), 400–420 (VFLP…YFLV), 429–449 (LAYF…FVLF), 458–478 (IAGT…SGYF), 487–507 (YWLF…LLIN), and 548–568 (FNVY…FLVL).

The protein belongs to the ABC transporter superfamily. ABCG family. Eye pigment precursor importer (TC 3.A.1.204) subfamily.

It is found in the membrane. In Arabidopsis thaliana (Mouse-ear cress), this protein is ABC transporter G family member 4 (ABCG4).